We begin with the raw amino-acid sequence, 400 residues long: Protein phyllopod (400 aa).

Residues 109 to 127 (QERTKLRPVAMVRPTVRVQ) are interaction with sina. Residues 125-145 (RVQPQSQPQLQPQVPINPTPA) form a disordered region. Over residues 127–138 (QPQSQPQLQPQV) the composition is skewed to low complexity. The tract at residues 241-320 (YQRFPQPSVD…TAISEVLPTA (80 aa)) is interaction with ttk. Positions 319–362 (TARYQVTHEENKENQQAQEMELELEEEEEVDGRAELEVVQEAEA) form a coiled coil. Positions 346–382 (EEVDGRAELEVVQEAEAPLEPQSHHKQGNSHQNSHQA) are disordered.

In terms of assembly, component of some E3 complex at least composed of sina, ebi and phyl, required for the degradation of ttk. As to expression, in embryos, it is ubiquitously present before cellularization. During stages 9-11, it is expressed in neuroblasts and the SOP cells. From stage 12 onward, it decreases, but remains in a subset of PNS cells at stages 12-14. Weakly expressed in wing imaginal disks, in the SOP cells of wing margin bristles, notal macrochaetes, and other sensory organs. In leg disks, it is expressed in the precursors of the femoral chordotonal organs, as well as in external sensory SOP cells. Strongly expressed in the eye-antenna disk, it is specifically expressed in R1, R6 and R7 cells, and not in R3, R3, R4, R5 and R8 cells.

It is found in the nucleus. Essential adapter component of E3 ubiquitin ligase complexes; involved in R7 photoreceptor cell differentiation, embryonic nervous system, external sensory organ development and specification of particular muscles. E3 ubiquitin ligase complexes mediate ubiquitination and subsequent proteasomal degradation of target proteins. Required for specification of R7 photoreceptor cell fate in the eye by participating in the ubiquitination and subsequent proteasomal degradation of Tramtrack (ttk), a general inhibitor of photoreceptor differentiation. Acts downstream of Notch signaling to specify the fate of the SOP (sensory organ precursor) cells and their progeny, probably via the sina-mediated proteasomal degradation of ttk. Its restricted pattern of expression, upon Notch and Ras signaling pathways, suggests that it acts as a key determinant in E3 complexes to trigger protein proteolysis in appropriate cells. This is Protein phyllopod (phyl) from Drosophila melanogaster (Fruit fly).